The following is a 764-amino-acid chain: 1,4-alpha-glucan branching enzyme GlgB (764 aa).

The active-site Nucleophile is the Asp-434. Glu-487 functions as the Proton donor in the catalytic mechanism.

The protein belongs to the glycosyl hydrolase 13 family. GlgB subfamily. In terms of assembly, monomer.

The enzyme catalyses Transfers a segment of a (1-&gt;4)-alpha-D-glucan chain to a primary hydroxy group in a similar glucan chain.. It participates in glycan biosynthesis; glycogen biosynthesis. In terms of biological role, catalyzes the formation of the alpha-1,6-glucosidic linkages in glycogen by scission of a 1,4-alpha-linked oligosaccharide from growing alpha-1,4-glucan chains and the subsequent attachment of the oligosaccharide to the alpha-1,6 position. In Nostoc sp. (strain PCC 7120 / SAG 25.82 / UTEX 2576), this protein is 1,4-alpha-glucan branching enzyme GlgB.